The following is a 154-amino-acid chain: uncharacterized protein (154 aa).

Its subcellular location is the mitochondrion. This is an uncharacterized protein from Vicia faba (Broad bean).